Reading from the N-terminus, the 492-residue chain is Gamma-aminobutyric acid receptor subunit alpha-3 (492 aa).

Residues 1–28 form the signal peptide; that stretch reads MIITQTSHCYMTSLGILFLINILPGTTG. Residues 28–54 form a disordered region; the sequence is GQGESRRQEPGDFVKQDIGGLSPKHAP. Over 29-274 the chain is Extracellular; that stretch reads QGESRRQEPG…MTTHFHLKRK (246 aa). The segment covering 31-42 has biased composition (basic and acidic residues); that stretch reads ESRRQEPGDFVK. N-linked (GlcNAc...) asparagine glycosylation is present at Asn-63. Arg-119 serves as a coordination point for 4-aminobutanoate. Residues Asn-163 and Asn-176 are each glycosylated (N-linked (GlcNAc...) asparagine). Residue Thr-182 participates in 4-aminobutanoate binding. A disulfide bridge links Cys-191 with Cys-205. Asn-228 carries an N-linked (GlcNAc...) asparagine glycan. Residues 275-295 form a helical membrane-spanning segment; it reads IGYFVIQTYLPCIMTVILSQV. Residues 296-305 lie on the Cytoplasmic side of the membrane; it reads SFWLNRESVP. Residues 306 to 325 traverse the membrane as a helical segment; that stretch reads ARTVFGVTTVLTMTTLSISA. Residues 326–336 are Extracellular-facing; the sequence is RNSLPKVAYAT. The helical transmembrane segment at 337 to 357 threads the bilayer; that stretch reads AMDWFIAVCYAFVFSALIEFA. The Cytoplasmic segment spans residues 358 to 457; that stretch reads TVNYFTKRSW…TYNSVSKVDK (100 aa). Phosphoserine is present on Ser-426. Thr-427 carries the phosphothreonine modification. Phosphoserine occurs at positions 433 and 442. Residues 458–478 traverse the membrane as a helical segment; it reads ISRIIFPVLFAIFNLVYWATY. At 479–492 the chain is on the extracellular side; that stretch reads VNRESAIKGMIRKQ.

It belongs to the ligand-gated ion channel (TC 1.A.9) family. Gamma-aminobutyric acid receptor (TC 1.A.9.5) subfamily. GABRA3 sub-subfamily. As to quaternary structure, heteropentamer, formed by a combination of alpha (GABRA1-6), beta (GABRB1-3), gamma (GABRG1-3), delta (GABRD), epsilon (GABRE), rho (GABRR1-3), pi (GABRP) and theta (GABRQ) chains, each subunit exhibiting distinct physiological and pharmacological properties. Binds UBQLN1. Interacts with GPHN.

Its subcellular location is the postsynaptic cell membrane. The protein resides in the cell membrane. It carries out the reaction chloride(in) = chloride(out). Potentiated by etomidate, propofol, pregnanolone and flurazepam. Alpha subunit of the heteropentameric ligand-gated chloride channel gated by gamma-aminobutyric acid (GABA), a major inhibitory neurotransmitter in the brain. GABA-gated chloride channels, also named GABA(A) receptors (GABAAR), consist of five subunits arranged around a central pore and contain GABA active binding site(s) located at the alpha and beta subunit interface(s). When activated by GABA, GABAARs selectively allow the flow of chloride anions across the cell membrane down their electrochemical gradient. Chloride influx into the postsynaptic neuron following GABAAR opening decreases the neuron ability to generate a new action potential, thereby reducing nerve transmission. This Homo sapiens (Human) protein is Gamma-aminobutyric acid receptor subunit alpha-3.